The sequence spans 282 residues: Parvulin-like PPIase (282 aa).

Positions 1–20 (MKKLSVIFLSVSMLSSIAFC) are cleaved as a signal peptide. One can recognise a PpiC domain in the interval 138-231 (KEQIKVAHIL…FGWHIIKVLE (94 aa)).

The protein belongs to the PpiC/parvulin rotamase family.

The protein localises to the cell outer membrane. The catalysed reaction is [protein]-peptidylproline (omega=180) = [protein]-peptidylproline (omega=0). This chain is Parvulin-like PPIase (plp), found in Rickettsia typhi (strain ATCC VR-144 / Wilmington).